A 352-amino-acid chain; its full sequence is S-adenosylmethionine:tRNA ribosyltransferase-isomerase (352 aa).

It belongs to the QueA family. Monomer.

The protein resides in the cytoplasm. The enzyme catalyses 7-aminomethyl-7-carbaguanosine(34) in tRNA + S-adenosyl-L-methionine = epoxyqueuosine(34) in tRNA + adenine + L-methionine + 2 H(+). It participates in tRNA modification; tRNA-queuosine biosynthesis. Its function is as follows. Transfers and isomerizes the ribose moiety from AdoMet to the 7-aminomethyl group of 7-deazaguanine (preQ1-tRNA) to give epoxyqueuosine (oQ-tRNA). The sequence is that of S-adenosylmethionine:tRNA ribosyltransferase-isomerase from Solibacter usitatus (strain Ellin6076).